The chain runs to 397 residues: Ribosomal RNA large subunit methyltransferase I (397 aa).

A PUA domain is found at 2 to 79 (TAAIYLVKGR…KEEINKAFFV (78 aa)).

Belongs to the methyltransferase superfamily. RlmI family.

It localises to the cytoplasm. The catalysed reaction is cytidine(1962) in 23S rRNA + S-adenosyl-L-methionine = 5-methylcytidine(1962) in 23S rRNA + S-adenosyl-L-homocysteine + H(+). Its function is as follows. Specifically methylates the cytosine at position 1962 (m5C1962) of 23S rRNA. This chain is Ribosomal RNA large subunit methyltransferase I, found in Vibrio campbellii (strain ATCC BAA-1116).